The sequence spans 502 residues: Rab11 family-interacting protein 4B (502 aa).

2 disordered regions span residues 1 to 49 (MSIQ…EEGI) and 71 to 98 (SALS…TTSS). Positions 15–29 (EEGRGVERDSDRDSA) are enriched in basic and acidic residues. Over residues 71-80 (SALSSASLNE) the composition is skewed to polar residues. Residues 81–93 (EQFEDYGEGEDGD) are compositionally biased toward acidic residues. Residues 228–482 (DVKTKLKQEN…EEINLRLRQY (255 aa)) adopt a coiled-coil conformation. Residues 439 to 501 (EAKNLFATQT…DHNPSILEIK (63 aa)) enclose the FIP-RBD domain.

In terms of assembly, homodimer. Forms a complex with Rab11 (rab11a or rab11b) and arf6.

It localises to the recycling endosome membrane. The protein localises to the cleavage furrow. Its subcellular location is the midbody. It is found in the cytoplasmic vesicle. Acts as a regulator of endocytic traffic by participating in membrane delivery. Required for the abscission step in cytokinesis, possibly by acting as an 'address tag' delivering recycling endosome membranes to the cleavage furrow during late cytokinesis. The sequence is that of Rab11 family-interacting protein 4B (rab11fip4b) from Danio rerio (Zebrafish).